A 321-amino-acid polypeptide reads, in one-letter code: Carbonic anhydrase, chloroplastic (321 aa).

A chloroplast-targeting transit peptide spans 1 to 100 (MSTASINSCL…AAARVDQITA (100 aa)).

It belongs to the beta-class carbonic anhydrase family. Homohexamer.

The protein resides in the plastid. The protein localises to the chloroplast stroma. The catalysed reaction is hydrogencarbonate + H(+) = CO2 + H2O. Its function is as follows. Reversible hydration of carbon dioxide. The chain is Carbonic anhydrase, chloroplastic from Nicotiana tabacum (Common tobacco).